Here is a 197-residue protein sequence, read N- to C-terminus: uncharacterized protein (197 aa).

2 disordered regions span residues 1–30 (MSDD…PKVV) and 115–174 (PSLK…KQEL). Over residues 21-30 (KPTSTTPKVV) the composition is skewed to low complexity. Residues 123-137 (KVDEDDDQIYEDKEE) are compositionally biased toward acidic residues. Residues 157–170 (KSNKKVAPKQKKKS) are compositionally biased toward basic residues.

This is an uncharacterized protein from Dictyostelium discoideum (Social amoeba).